The primary structure comprises 91 residues: UPF0386 protein Caul_4643 (91 aa).

This sequence belongs to the UPF0386 family.

The protein is UPF0386 protein Caul_4643 of Caulobacter sp. (strain K31).